The following is a 211-amino-acid chain: N-(5'-phosphoribosyl)anthranilate isomerase (211 aa).

The protein belongs to the TrpF family.

It catalyses the reaction N-(5-phospho-beta-D-ribosyl)anthranilate = 1-(2-carboxyphenylamino)-1-deoxy-D-ribulose 5-phosphate. The protein operates within amino-acid biosynthesis; L-tryptophan biosynthesis; L-tryptophan from chorismate: step 3/5. The protein is N-(5'-phosphoribosyl)anthranilate isomerase of Zymomonas mobilis subsp. mobilis (strain ATCC 31821 / ZM4 / CP4).